The primary structure comprises 341 residues: ATP-dependent 6-phosphofructokinase 3 (341 aa).

Residues Gly-10, 72 to 73, and 102 to 105 contribute to the ATP site; these read RV and GEGT. Glu-103 lines the Mg(2+) pocket. Residues 125–127, Arg-162, 169–171, Glu-222, Arg-266, and 272–275 contribute to the substrate site; these read TID, MGR, and HVQR. Asp-127 (proton acceptor) is an active-site residue.

Belongs to the phosphofructokinase type A (PFKA) family. Mixed-substrate PFK group III subfamily. Homodimer or homotetramer. Mg(2+) serves as cofactor.

It localises to the cytoplasm. It catalyses the reaction beta-D-fructose 6-phosphate + ATP = beta-D-fructose 1,6-bisphosphate + ADP + H(+). It functions in the pathway carbohydrate degradation; glycolysis; D-glyceraldehyde 3-phosphate and glycerone phosphate from D-glucose: step 3/4. In terms of biological role, catalyzes the phosphorylation of D-fructose 6-phosphate to fructose 1,6-bisphosphate by ATP, the first committing step of glycolysis. The polypeptide is ATP-dependent 6-phosphofructokinase 3 (Streptomyces coelicolor (strain ATCC BAA-471 / A3(2) / M145)).